The sequence spans 196 residues: Imidazole glycerol phosphate synthase subunit HisH (196 aa).

The region spanning 2-196 (KVAVIKYNAG…ERIIKNFLEL (195 aa)) is the Glutamine amidotransferase type-1 domain. The active-site Nucleophile is Cys77. Residues His178 and Glu180 contribute to the active site.

In terms of assembly, heterodimer of HisH and HisF.

It localises to the cytoplasm. It carries out the reaction 5-[(5-phospho-1-deoxy-D-ribulos-1-ylimino)methylamino]-1-(5-phospho-beta-D-ribosyl)imidazole-4-carboxamide + L-glutamine = D-erythro-1-(imidazol-4-yl)glycerol 3-phosphate + 5-amino-1-(5-phospho-beta-D-ribosyl)imidazole-4-carboxamide + L-glutamate + H(+). The enzyme catalyses L-glutamine + H2O = L-glutamate + NH4(+). It participates in amino-acid biosynthesis; L-histidine biosynthesis; L-histidine from 5-phospho-alpha-D-ribose 1-diphosphate: step 5/9. Its function is as follows. IGPS catalyzes the conversion of PRFAR and glutamine to IGP, AICAR and glutamate. The HisH subunit catalyzes the hydrolysis of glutamine to glutamate and ammonia as part of the synthesis of IGP and AICAR. The resulting ammonia molecule is channeled to the active site of HisF. In Bacteroides fragilis (strain ATCC 25285 / DSM 2151 / CCUG 4856 / JCM 11019 / LMG 10263 / NCTC 9343 / Onslow / VPI 2553 / EN-2), this protein is Imidazole glycerol phosphate synthase subunit HisH.